A 364-amino-acid chain; its full sequence is Cobalt-precorrin-5B C(1)-methyltransferase (364 aa).

It belongs to the CbiD family.

It carries out the reaction Co-precorrin-5B + S-adenosyl-L-methionine = Co-precorrin-6A + S-adenosyl-L-homocysteine. It participates in cofactor biosynthesis; adenosylcobalamin biosynthesis; cob(II)yrinate a,c-diamide from sirohydrochlorin (anaerobic route): step 6/10. Functionally, catalyzes the methylation of C-1 in cobalt-precorrin-5B to form cobalt-precorrin-6A. This is Cobalt-precorrin-5B C(1)-methyltransferase from Pseudomonas entomophila (strain L48).